We begin with the raw amino-acid sequence, 291 residues long: Small ribosomal subunit protein uS2 (291 aa).

Belongs to the universal ribosomal protein uS2 family.

This chain is Small ribosomal subunit protein uS2, found in Lawsonia intracellularis (strain PHE/MN1-00).